Consider the following 136-residue polypeptide: Large ribosomal subunit protein uL16c (136 aa).

The protein belongs to the universal ribosomal protein uL16 family. As to quaternary structure, part of the 50S ribosomal subunit.

It is found in the plastid. Its subcellular location is the chloroplast. This chain is Large ribosomal subunit protein uL16c, found in Buxus microphylla (Littleleaf boxwood).